The primary structure comprises 400 residues: Tryptophan synthase beta chain (400 aa).

Lys92 carries the post-translational modification N6-(pyridoxal phosphate)lysine.

The protein belongs to the TrpB family. As to quaternary structure, tetramer of two alpha and two beta chains. Pyridoxal 5'-phosphate is required as a cofactor.

It carries out the reaction (1S,2R)-1-C-(indol-3-yl)glycerol 3-phosphate + L-serine = D-glyceraldehyde 3-phosphate + L-tryptophan + H2O. Its pathway is amino-acid biosynthesis; L-tryptophan biosynthesis; L-tryptophan from chorismate: step 5/5. Functionally, the beta subunit is responsible for the synthesis of L-tryptophan from indole and L-serine. This is Tryptophan synthase beta chain from Neisseria gonorrhoeae (strain NCCP11945).